A 127-amino-acid polypeptide reads, in one-letter code: Large ribosomal subunit protein uL22 (127 aa).

The segment covering glycine 106 to valine 117 has biased composition (low complexity). A disordered region spans residues glycine 106–glutamate 127.

Belongs to the universal ribosomal protein uL22 family. In terms of assembly, part of the 50S ribosomal subunit.

This protein binds specifically to 23S rRNA; its binding is stimulated by other ribosomal proteins, e.g. L4, L17, and L20. It is important during the early stages of 50S assembly. It makes multiple contacts with different domains of the 23S rRNA in the assembled 50S subunit and ribosome. Its function is as follows. The globular domain of the protein is located near the polypeptide exit tunnel on the outside of the subunit, while an extended beta-hairpin is found that lines the wall of the exit tunnel in the center of the 70S ribosome. The chain is Large ribosomal subunit protein uL22 from Rubrobacter xylanophilus (strain DSM 9941 / JCM 11954 / NBRC 16129 / PRD-1).